A 278-amino-acid chain; its full sequence is 4-deoxy-L-threo-5-hexosulose-uronate ketol-isomerase (278 aa).

Zn(2+)-binding residues include H196, H198, E203, and H245.

This sequence belongs to the KduI family. Zn(2+) is required as a cofactor.

The enzyme catalyses 5-dehydro-4-deoxy-D-glucuronate = 3-deoxy-D-glycero-2,5-hexodiulosonate. It participates in glycan metabolism; pectin degradation; 2-dehydro-3-deoxy-D-gluconate from pectin: step 4/5. Functionally, catalyzes the isomerization of 5-dehydro-4-deoxy-D-glucuronate to 3-deoxy-D-glycero-2,5-hexodiulosonate. The sequence is that of 4-deoxy-L-threo-5-hexosulose-uronate ketol-isomerase from Shigella flexneri serotype 5b (strain 8401).